A 443-amino-acid polypeptide reads, in one-letter code: Threonine/serine transporter TdcC (443 aa).

11 consecutive transmembrane segments (helical) span residues 22 to 42 (TTWT…FFPI), 44 to 64 (AGFG…PIAF), 97 to 117 (GVVI…IYGV), 135 to 155 (ALNR…IIWF), 163 to 183 (VMSF…LSLI), 207 to 227 (ILVT…FSPI), 259 to 279 (ASIL…FALS), 319 to 339 (ASII…LGTL), 366 to 386 (LSMV…PNIL), 389 to 409 (IEAM…MYAI), and 422 to 442 (IDNV…VYKV).

Belongs to the amino acid/polyamine transporter 2 family. SdaC/TdcC subfamily.

It localises to the cell inner membrane. The enzyme catalyses L-threonine(in) + H(+)(in) = L-threonine(out) + H(+)(out). It catalyses the reaction L-serine(in) + H(+)(in) = L-serine(out) + H(+)(out). In terms of biological role, involved in the import of threonine and serine into the cell, with the concomitant import of a proton (symport system). In Escherichia fergusonii (strain ATCC 35469 / DSM 13698 / CCUG 18766 / IAM 14443 / JCM 21226 / LMG 7866 / NBRC 102419 / NCTC 12128 / CDC 0568-73), this protein is Threonine/serine transporter TdcC.